The following is a 346-amino-acid chain: Tripartite motif-containing protein 44 (346 aa).

The segment at 68 to 167 is disordered; sequence TPPASGGDDA…ETEAESEFDP (100 aa). Over residues 89–167 the composition is skewed to acidic residues; it reads EGEVESEVGE…ETEAESEFDP (79 aa). A B box-type zinc finger spans residues 176–217; that stretch reads VAKRKCPDHGLDLSTYCQEDRQLICVLCPVIGAHRGHQLSTL. Residues Cys181, His184, Cys203, and His209 each coordinate Zn(2+). A coiled-coil region spans residues 292–327; that stretch reads AHVTEILADIQSHMDRLMTQMAQAKEQLDTSNESAE. Positions 313-346 are disordered; sequence AQAKEQLDTSNESAEPKAEGDEEGPSGASEEEDT. Acidic residues predominate over residues 332 to 346; it reads GDEEGPSGASEEEDT. Phosphoserine occurs at positions 338 and 341.

As to quaternary structure, interacts (via coiled coil) with TRIM17 (via coiled coil). In terms of tissue distribution, expressed mainly in brain with high level in cerebral hemispheres and cerebellum. Lower expression in kidney, lung and spleen. In brain is detected in the hippocampus, thalamic and pretectal nuclei, substantia nigra, the dorsal part of the medulla, the cerebellum, in the olfactory nucleus, other cortical areas apart from hippocampus and the striatum. Indeed expression is confined in neuronal somata namely in the CA3 region and dentate gyrus of the hippocampus, caudate-putamen, parabranchial nucleus, olfactory nucleus, cortex, deep cerebellar nuclei and thalamus. Also highly expressed in the spleen. thymus and testis.

Functionally, may play a role in the process of differentiation and maturation of neuronal cells. May regulate the activity of TRIM17. Is a negative regulator of PAX6 expression. This chain is Tripartite motif-containing protein 44 (Trim44), found in Mus musculus (Mouse).